We begin with the raw amino-acid sequence, 297 residues long: MRTKKRTKEMLPIFDQKKVAFIGAGSMAEGMISGIVRANKIPKQNICVTNRSNTERLTELELQYGIKGALPNQLCIEDMDVLILAMKPKDAENALSSLKSRIQPHQLILSVLAGITTSFIEQSLLNEQPVVRVMPNTSSMIGASATAIALGKYVSEDLKKLAEALLGCMGEVYTIQENQMDIFTGIAGSGPAYFYYLMEFIEKTGEEAGLDKQLSRSIGAQTLLGAAKMLMETGEHPEILRDNITSPNGTTAAGLQALKKSGGGEAISQAIKHAAKRSKEISEDIEKTAAPLSGVIK.

Belongs to the pyrroline-5-carboxylate reductase family.

It is found in the cytoplasm. The catalysed reaction is L-proline + NADP(+) = (S)-1-pyrroline-5-carboxylate + NADPH + 2 H(+). It catalyses the reaction L-proline + NAD(+) = (S)-1-pyrroline-5-carboxylate + NADH + 2 H(+). Its pathway is amino-acid biosynthesis; L-proline biosynthesis; L-proline from L-glutamate 5-semialdehyde: step 1/1. Functionally, catalyzes the reduction of 1-pyrroline-5-carboxylate (PCA) to L-proline. This is Pyrroline-5-carboxylate reductase 1 (proH) from Bacillus subtilis (strain 168).